A 192-amino-acid chain; its full sequence is Large ribosomal subunit protein uL3 (192 aa).

Belongs to the universal ribosomal protein uL3 family. In terms of assembly, part of the 50S ribosomal subunit. Forms a cluster with proteins L14 and L19.

One of the primary rRNA binding proteins, it binds directly near the 3'-end of the 23S rRNA, where it nucleates assembly of the 50S subunit. The polypeptide is Large ribosomal subunit protein uL3 (rplC) (Helicobacter hepaticus (strain ATCC 51449 / 3B1)).